Consider the following 145-residue polypeptide: D-aminoacyl-tRNA deacylase (145 aa).

The short motif at 137-138 is the Gly-cisPro motif, important for rejection of L-amino acids element; that stretch reads GP.

It belongs to the DTD family. As to quaternary structure, homodimer.

It localises to the cytoplasm. The catalysed reaction is glycyl-tRNA(Ala) + H2O = tRNA(Ala) + glycine + H(+). The enzyme catalyses a D-aminoacyl-tRNA + H2O = a tRNA + a D-alpha-amino acid + H(+). Its function is as follows. An aminoacyl-tRNA editing enzyme that deacylates mischarged D-aminoacyl-tRNAs. Also deacylates mischarged glycyl-tRNA(Ala), protecting cells against glycine mischarging by AlaRS. Acts via tRNA-based rather than protein-based catalysis; rejects L-amino acids rather than detecting D-amino acids in the active site. By recycling D-aminoacyl-tRNA to D-amino acids and free tRNA molecules, this enzyme counteracts the toxicity associated with the formation of D-aminoacyl-tRNA entities in vivo and helps enforce protein L-homochirality. In Escherichia coli O7:K1 (strain IAI39 / ExPEC), this protein is D-aminoacyl-tRNA deacylase.